The following is a 419-amino-acid chain: Protein FAM217A (419 aa).

Disordered stretches follow at residues 1–60, 96–119, 236–299, and 317–382; these read MGRK…LENP, KGSTVDKRNSSVEENVTDESDLSE, SSSK…SRAL, and KNSK…RTKK. The segment covering 7 to 19 has biased composition (low complexity); sequence ESCSSSLHVSSIS. The segment covering 236–251 has biased composition (low complexity); it reads SSSKAIATKAKAPKIP. 2 stretches are compositionally biased toward polar residues: residues 252–261 and 271–281; these read ETSTLQTSGV and NSGSGKPEQNV. 2 stretches are compositionally biased toward low complexity: residues 282 to 296 and 334 to 345; these read SKWSLSSAGKSKSNS and PTTTTQATQPMA.

It belongs to the FAM217 family.

The sequence is that of Protein FAM217A (Fam217a) from Mus musculus (Mouse).